The chain runs to 270 residues: CASP-like protein 4A1 (270 aa).

The tract at residues 1–110 (MEELEKTQKF…PSFSSSSSTP (110 aa)) is disordered. At 1 to 121 (MEELEKTQKF…ESKWASLIRK (121 aa)) the chain is on the cytoplasmic side. Polar residues predominate over residues 24–66 (SSPINFEMSSRSSLHSLPQTTIESPPDSPTLSSIPDSHGSSPH). The span at 85–97 (NGEEEKKVSESRR) shows a compositional bias: basic and acidic residues. Residues 100–110 (RPSFSSSSSTP) show a composition bias toward low complexity. The chain crosses the membrane as a helical span at residues 122–142 (ALLGFRVIAFVSCLVSFSVMV). Residues 143-161 (SDRDKGWAHDSFYNYKEFR) lie on the Extracellular side of the membrane. The chain crosses the membrane as a helical span at residues 162-182 (FCLAANVIGFVYSGFMICDLV). At 183–198 (YLLSTSIRRSRHNLRH) the chain is on the cytoplasmic side. The chain crosses the membrane as a helical span at residues 199 to 221 (FLEFGLDQMLAYLLASASTSASI). Topologically, residues 222–246 (RVDDWQSNWGADKFPDLARASVALS) are extracellular. The chain crosses the membrane as a helical span at residues 247-267 (YVSFVAFAFCSLASGYALCAL). Residues 268–270 (RSI) are Cytoplasmic-facing.

The protein belongs to the Casparian strip membrane proteins (CASP) family. As to quaternary structure, homodimer and heterodimers.

Its subcellular location is the cell membrane. In Arabidopsis thaliana (Mouse-ear cress), this protein is CASP-like protein 4A1.